The primary structure comprises 320 residues: Ribose-phosphate pyrophosphokinase 1 (320 aa).

Residues 39-41 and 98-99 each bind ATP; these read DGE and RQ. The Mg(2+) site is built by His-132 and Asp-173. Lys-196 is a catalytic residue. D-ribose 5-phosphate-binding positions include Arg-198, Asp-224, and 228-232; that span reads DTAGT.

It belongs to the ribose-phosphate pyrophosphokinase family. Class I subfamily. As to quaternary structure, homohexamer. It depends on Mg(2+) as a cofactor.

The protein localises to the cytoplasm. It carries out the reaction D-ribose 5-phosphate + ATP = 5-phospho-alpha-D-ribose 1-diphosphate + AMP + H(+). The protein operates within metabolic intermediate biosynthesis; 5-phospho-alpha-D-ribose 1-diphosphate biosynthesis; 5-phospho-alpha-D-ribose 1-diphosphate from D-ribose 5-phosphate (route I): step 1/1. Functionally, involved in the biosynthesis of the central metabolite phospho-alpha-D-ribosyl-1-pyrophosphate (PRPP) via the transfer of pyrophosphoryl group from ATP to 1-hydroxyl of ribose-5-phosphate (Rib-5-P). The polypeptide is Ribose-phosphate pyrophosphokinase 1 (Streptococcus pyogenes serotype M1).